We begin with the raw amino-acid sequence, 195 residues long: Peptidyl-tRNA hydrolase (195 aa).

Tyrosine 17 is a binding site for tRNA. Residue histidine 22 is the Proton acceptor of the active site. TRNA-binding residues include phenylalanine 68, asparagine 70, and asparagine 116.

The protein belongs to the PTH family. In terms of assembly, monomer.

It localises to the cytoplasm. It carries out the reaction an N-acyl-L-alpha-aminoacyl-tRNA + H2O = an N-acyl-L-amino acid + a tRNA + H(+). Hydrolyzes ribosome-free peptidyl-tRNAs (with 1 or more amino acids incorporated), which drop off the ribosome during protein synthesis, or as a result of ribosome stalling. Its function is as follows. Catalyzes the release of premature peptidyl moieties from peptidyl-tRNA molecules trapped in stalled 50S ribosomal subunits, and thus maintains levels of free tRNAs and 50S ribosomes. This Pectobacterium atrosepticum (strain SCRI 1043 / ATCC BAA-672) (Erwinia carotovora subsp. atroseptica) protein is Peptidyl-tRNA hydrolase.